The chain runs to 318 residues: uncharacterized protein (318 aa).

Belongs to the NAD(P)-dependent epimerase/dehydratase family.

This is an uncharacterized protein from Staphylococcus haemolyticus (strain JCSC1435).